We begin with the raw amino-acid sequence, 180 residues long: Large ribosomal subunit protein uL5 (180 aa).

It belongs to the universal ribosomal protein uL5 family. As to quaternary structure, part of the 50S ribosomal subunit; part of the 5S rRNA/L5/L18/L25 subcomplex. Contacts the 5S rRNA and the P site tRNA. Forms a bridge to the 30S subunit in the 70S ribosome.

This is one of the proteins that bind and probably mediate the attachment of the 5S RNA into the large ribosomal subunit, where it forms part of the central protuberance. In the 70S ribosome it contacts protein S13 of the 30S subunit (bridge B1b), connecting the 2 subunits; this bridge is implicated in subunit movement. Contacts the P site tRNA; the 5S rRNA and some of its associated proteins might help stabilize positioning of ribosome-bound tRNAs. This Polynucleobacter necessarius subsp. necessarius (strain STIR1) protein is Large ribosomal subunit protein uL5.